Here is a 445-residue protein sequence, read N- to C-terminus: Phosphoglucosamine mutase (445 aa).

The active-site Phosphoserine intermediate is serine 102. Positions 102, 241, 243, and 245 each coordinate Mg(2+). Phosphoserine is present on serine 102.

It belongs to the phosphohexose mutase family. Requires Mg(2+) as cofactor. Activated by phosphorylation.

The enzyme catalyses alpha-D-glucosamine 1-phosphate = D-glucosamine 6-phosphate. Functionally, catalyzes the conversion of glucosamine-6-phosphate to glucosamine-1-phosphate. The polypeptide is Phosphoglucosamine mutase (Shewanella sp. (strain W3-18-1)).